A 178-amino-acid chain; its full sequence is Large ribosomal subunit protein uL5 (178 aa).

A2 carries the post-translational modification N-acetylalanine. K38 participates in a covalent cross-link: Glycyl lysine isopeptide (Lys-Gly) (interchain with G-Cter in SUMO2). Phosphothreonine occurs at positions 44 and 47. K52 bears the N6-acetyllysine; alternate mark. K52 participates in a covalent cross-link: Glycyl lysine isopeptide (Lys-Gly) (interchain with G-Cter in SUMO2); alternate. N6-acetyllysine is present on K85. Residue K154 forms a Glycyl lysine isopeptide (Lys-Gly) (interchain with G-Cter in SUMO2) linkage.

Belongs to the universal ribosomal protein uL5 family. In terms of assembly, component of the large ribosomal subunit (LSU). Part of the 5S RNP complex, which is a LSU subcomplex composed of the 5S RNA, RPL5 and RPL11. Component of a hexameric 5S RNP precursor complex, composed of 5S RNA, RRS1, RPF2/BXDC1, RPL5, RPL11 and HEATR3; this complex acts as a precursor for ribosome assembly. Interacts with PML. Interacts with MDM2 (via its RanBP2-type zinc finger domain); negatively regulates MDM2-mediated TP53 ubiquitination and degradation. Interacts with NOP53; retains RPL11 into the nucleolus.

It is found in the nucleus. The protein localises to the nucleolus. Its subcellular location is the cytoplasm. Functionally, component of the ribosome, a large ribonucleoprotein complex responsible for the synthesis of proteins in the cell. The small ribosomal subunit (SSU) binds messenger RNAs (mRNAs) and translates the encoded message by selecting cognate aminoacyl-transfer RNA (tRNA) molecules. The large subunit (LSU) contains the ribosomal catalytic site termed the peptidyl transferase center (PTC), which catalyzes the formation of peptide bonds, thereby polymerizing the amino acids delivered by tRNAs into a polypeptide chain. The nascent polypeptides leave the ribosome through a tunnel in the LSU and interact with protein factors that function in enzymatic processing, targeting, and the membrane insertion of nascent chains at the exit of the ribosomal tunnel. As part of the 5S RNP/5S ribonucleoprotein particle it is an essential component of the LSU, required for its formation and the maturation of rRNAs. It also couples ribosome biogenesis to p53/TP53 activation. As part of the 5S RNP it accumulates in the nucleoplasm and inhibits MDM2, when ribosome biogenesis is perturbed, mediating the stabilization and the activation of TP53. Promotes nucleolar location of PML. This Pongo abelii (Sumatran orangutan) protein is Large ribosomal subunit protein uL5 (RPL11).